The chain runs to 195 residues: dTTP/UTP pyrophosphatase (195 aa).

The active-site Proton acceptor is aspartate 73.

This sequence belongs to the Maf family. YhdE subfamily. A divalent metal cation is required as a cofactor.

Its subcellular location is the cytoplasm. The catalysed reaction is dTTP + H2O = dTMP + diphosphate + H(+). It catalyses the reaction UTP + H2O = UMP + diphosphate + H(+). Nucleoside triphosphate pyrophosphatase that hydrolyzes dTTP and UTP. May have a dual role in cell division arrest and in preventing the incorporation of modified nucleotides into cellular nucleic acids. The polypeptide is dTTP/UTP pyrophosphatase (Exiguobacterium sibiricum (strain DSM 17290 / CCUG 55495 / CIP 109462 / JCM 13490 / 255-15)).